Consider the following 281-residue polypeptide: Protease HtpX homolog (281 aa).

2 helical membrane passes run 6–26 (VWLL…AIGG) and 28–48 (SGAL…YYYS). His-130 is a binding site for Zn(2+). The active site involves Glu-131. His-134 provides a ligand contact to Zn(2+). The next 2 membrane-spanning stretches (helical) occupy residues 140 to 160 (VLIG…SNIV) and 181 to 201 (IASL…QLAI). Residue Glu-206 participates in Zn(2+) binding.

The protein belongs to the peptidase M48B family. It depends on Zn(2+) as a cofactor.

The protein localises to the cell membrane. In Pelotomaculum thermopropionicum (strain DSM 13744 / JCM 10971 / SI), this protein is Protease HtpX homolog.